The chain runs to 216 residues: Sperm microtubule inner protein 8 (216 aa).

Microtubule inner protein component of sperm flagellar doublet microtubules. In terms of tissue distribution, expressed in testis, prostate and placenta.

It localises to the cytoplasm. It is found in the cytoskeleton. Its subcellular location is the flagellum axoneme. Its function is as follows. Microtubule inner protein (MIP) part of the dynein-decorated doublet microtubules (DMTs) in flagellum axoneme. May serve to reinforce and thus stabilize the microtubule structure in the sperm flagella. The sequence is that of Sperm microtubule inner protein 8 from Homo sapiens (Human).